The sequence spans 834 residues: Glycerol-3-phosphate acyltransferase (834 aa).

An HXXXXD motif motif is present at residues 309 to 314 (CHRSHI).

Belongs to the GPAT/DAPAT family.

It localises to the cell inner membrane. The catalysed reaction is sn-glycerol 3-phosphate + an acyl-CoA = a 1-acyl-sn-glycero-3-phosphate + CoA. Its pathway is phospholipid metabolism; CDP-diacylglycerol biosynthesis; CDP-diacylglycerol from sn-glycerol 3-phosphate: step 1/3. In Pseudomonas fluorescens (strain ATCC BAA-477 / NRRL B-23932 / Pf-5), this protein is Glycerol-3-phosphate acyltransferase.